The sequence spans 804 residues: ATP-dependent RNA helicase dbp4 (804 aa).

The tract at residues 1–24 is disordered; it reads MAPANAPRNGKYAKSSQRTLKRKR. The short motif at 46–74 is the Q motif element; that stretch reads KAFTDLPLSEPTLSGLSASHYKTLTDIQS. Residues 77 to 251 form the Helicase ATP-binding domain; it reads VSHALKGRDI…RLSLQDPEYV (175 aa). 90-97 lines the ATP pocket; that stretch reads AKTGSGKT. Residues 199-202 carry the DEAD box motif; the sequence is DEAD. Residues 277-436 enclose the Helicase C-terminal domain; the sequence is KLDILWSFIR…SIKNQLQNMC (160 aa). Disordered regions lie at residues 493–541, 589–615, and 695–804; these read GDDT…DRMF, DKQLEVGGSSDESGSDSEAETGKKDVK, and LADV…GLLG. Basic and acidic residues predominate over residues 521-541; sequence DEKKSKKKDAPQVRTKYDRMF. Over residues 695–705 the composition is skewed to basic and acidic residues; that stretch reads LADVEDKELVK. The segment covering 706–715 has biased composition (basic residues); sequence QKRREKKEKR.

The protein belongs to the DEAD box helicase family. DDX10/DBP4 subfamily. As to quaternary structure, interacts with the U3 and U14 snoRNAs. Associates with pre-ribosomal complexes.

Its subcellular location is the nucleus. The protein resides in the nucleolus. It carries out the reaction ATP + H2O = ADP + phosphate + H(+). Functionally, ATP-dependent RNA helicase required for ribosome biogenesis. Involved in the release of U14 snoRNA in pre-ribosomal complexes. Required for pre-rRNA cleavage at site A2. This chain is ATP-dependent RNA helicase dbp4 (dbp4), found in Aspergillus terreus (strain NIH 2624 / FGSC A1156).